Reading from the N-terminus, the 551-residue chain is Adenine deaminase (551 aa).

This sequence belongs to the metallo-dependent hydrolases superfamily. Adenine deaminase family. The cofactor is Mn(2+).

The enzyme catalyses adenine + H2O + H(+) = hypoxanthine + NH4(+). The protein is Adenine deaminase of Leuconostoc mesenteroides subsp. mesenteroides (strain ATCC 8293 / DSM 20343 / BCRC 11652 / CCM 1803 / JCM 6124 / NCDO 523 / NBRC 100496 / NCIMB 8023 / NCTC 12954 / NRRL B-1118 / 37Y).